A 134-amino-acid chain; its full sequence is Retinol-binding protein 2 (134 aa).

Residues Lys41 and Gln109 each contribute to the all-trans-retinol site.

Belongs to the calycin superfamily. Fatty-acid binding protein (FABP) family.

The protein resides in the cytoplasm. Intracellular transport of retinol. In Rattus norvegicus (Rat), this protein is Retinol-binding protein 2 (Rbp2).